The primary structure comprises 76 residues: MAETDPKTVQDLTSVVQTLLQQMQDKFQTMSDQIIGRIDDMSSRIDDLEKNIADLMTQAGVEELDSENKIPATQKS.

It belongs to the HSBP1 family. As to quaternary structure, homohexamer. Associates with heptad repeats of HSF1 trimers and probably also HSF1 monomers, and with HSP70. Association with HSF1 trimers and HSP70 coincides with attenuation of heat shock response and the conversion of HSF1 trimer to monomer.

It localises to the nucleus. Negative regulator of the heat shock response. Negatively affects HSF1 DNA-binding activity. May have a role in the suppression of the activation of the stress response during the aging process. The sequence is that of Heat shock factor-binding protein 1 (HSBP1) from Bos taurus (Bovine).